The sequence spans 130 residues: Phosphoribosyl-ATP pyrophosphatase (130 aa).

This sequence belongs to the PRA-PH family.

The protein localises to the cytoplasm. It catalyses the reaction 1-(5-phospho-beta-D-ribosyl)-ATP + H2O = 1-(5-phospho-beta-D-ribosyl)-5'-AMP + diphosphate + H(+). It functions in the pathway amino-acid biosynthesis; L-histidine biosynthesis; L-histidine from 5-phospho-alpha-D-ribose 1-diphosphate: step 2/9. The protein is Phosphoribosyl-ATP pyrophosphatase of Albidiferax ferrireducens (strain ATCC BAA-621 / DSM 15236 / T118) (Rhodoferax ferrireducens).